A 556-amino-acid polypeptide reads, in one-letter code: Butanoate--CoA ligase AAE1 (556 aa).

Residues 554 to 556 (SKL) carry the Microbody targeting signal motif.

Belongs to the ATP-dependent AMP-binding enzyme family. In terms of tissue distribution, expressed in roots, leaves, stems, flowers and developing seeds.

The protein resides in the peroxisome. The enzyme catalyses butanoate + ATP + CoA = butanoyl-CoA + AMP + diphosphate. The catalysed reaction is hexanoate + ATP + CoA = hexanoyl-CoA + AMP + diphosphate. It carries out the reaction pentanoate + ATP + CoA = pentanoyl-CoA + AMP + diphosphate. It catalyses the reaction 4-methylpentanoate + ATP + CoA = 4-methylpentanoyl-CoA + AMP + diphosphate. Catalyzes the ligation of CoA on butanoate to produce butanoyl-CoA. Can also use hexanoate, pentanoate and 4-methylpentanoate as substrates with a lower efficiency. The polypeptide is Butanoate--CoA ligase AAE1 (Arabidopsis thaliana (Mouse-ear cress)).